Here is a 472-residue protein sequence, read N- to C-terminus: MRDVKKRKIAHEAPEHGSDTESTSSHKSVAQQDDPLETQDEATATESRPAPKSFKDLGIIDQLCEACETMGYKAPTPIQAESIPLALQGRDLIGLAETGSGKTAAFALPILQALMENPQSFFGLILAPTRELAFQISKSFESLGSTINVRCAVIVGGMDMVSQSIALGKKPHIIVATPGRLLDHLENTKGFSLRTLKYLVMDEADRLLDMDFGPLLDKILKVLPRERRTFLFSATMSSKVESLQRASLSNPLRVSVSSNKYQTVSTLLQSYLFLPHKHKDIYLVYLLNEFVGQSTIIFTRTVHETQRISFLLRSLGFGAIPLHGQLSQSARLGALGKFRSRSRDILVATDVAARGLDIPSVDVVLNFDLPTDSKTYVHRVGRTARAGKSGVAISFVTQYDVEIWLRIEGALGKKLKEYELEKDEVMVLAERVGEAQRQAIMEMKNFDEKRGTKAKKFGKGKRSRDEMDQEEG.

The interval 1 to 52 (MRDVKKRKIAHEAPEHGSDTESTSSHKSVAQQDDPLETQDEATATESRPAPK) is disordered. Positions 10–19 (AHEAPEHGSD) are enriched in basic and acidic residues. The segment covering 20–31 (TESTSSHKSVAQ) has biased composition (polar residues). The Q motif motif lies at 52 to 80 (KSFKDLGIIDQLCEACETMGYKAPTPIQA). Positions 83-254 (IPLALQGRDL…RASLSNPLRV (172 aa)) constitute a Helicase ATP-binding domain. ATP is bound at residue 96–103 (AETGSGKT). The DEAD box motif lies at 202-205 (DEAD). Residues 282-426 (YLVYLLNEFV…EYELEKDEVM (145 aa)) form the Helicase C-terminal domain. Residues 444–472 (KNFDEKRGTKAKKFGKGKRSRDEMDQEEG) are disordered. The span at 452-462 (TKAKKFGKGKR) shows a compositional bias: basic residues.

Belongs to the DEAD box helicase family. DDX47/RRP3 subfamily. Interacts with the SSU processome.

Its subcellular location is the nucleus. The catalysed reaction is ATP + H2O = ADP + phosphate + H(+). ATP-dependent rRNA helicase required for pre-ribosomal RNA processing. Involved in the maturation of the 35S-pre-rRNA and to its cleavage to mature 18S rRNA. The sequence is that of ATP-dependent rRNA helicase rrp3 from Aspergillus fumigatus (strain ATCC MYA-4609 / CBS 101355 / FGSC A1100 / Af293) (Neosartorya fumigata).